A 304-amino-acid chain; its full sequence is UDP-N-acetylenolpyruvoylglucosamine reductase (304 aa).

One can recognise an FAD-binding PCMH-type domain in the interval 28–193 (KTGGPADYLA…LTATFALTPG (166 aa)). Residue Arg-172 is part of the active site. Ser-222 acts as the Proton donor in catalysis. Glu-292 is a catalytic residue.

Belongs to the MurB family. It depends on FAD as a cofactor.

The protein localises to the cytoplasm. It carries out the reaction UDP-N-acetyl-alpha-D-muramate + NADP(+) = UDP-N-acetyl-3-O-(1-carboxyvinyl)-alpha-D-glucosamine + NADPH + H(+). The protein operates within cell wall biogenesis; peptidoglycan biosynthesis. In terms of biological role, cell wall formation. The polypeptide is UDP-N-acetylenolpyruvoylglucosamine reductase (Levilactobacillus brevis (strain ATCC 367 / BCRC 12310 / CIP 105137 / JCM 1170 / LMG 11437 / NCIMB 947 / NCTC 947) (Lactobacillus brevis)).